The primary structure comprises 206 residues: Methyl-coenzyme M reductase operon protein C (206 aa).

In terms of assembly, MCR is composed of three subunits: alpha, beta, and gamma. The function of proteins C and D is not known.

This is Methyl-coenzyme M reductase operon protein C (mcrC) from Methanosarcina barkeri (strain Fusaro / DSM 804).